The sequence spans 277 residues: NH(3)-dependent NAD(+) synthetase (277 aa).

36-43 (GLSGGIDS) contributes to the ATP binding site. D42 contacts Mg(2+). Deamido-NAD(+) is bound at residue R118. T138 is a binding site for ATP. Residue E143 participates in Mg(2+) binding. ATP is bound by residues K167 and S189.

It belongs to the NAD synthetase family. In terms of assembly, homodimer.

It catalyses the reaction deamido-NAD(+) + NH4(+) + ATP = AMP + diphosphate + NAD(+) + H(+). The protein operates within cofactor biosynthesis; NAD(+) biosynthesis; NAD(+) from deamido-NAD(+) (ammonia route): step 1/1. Its function is as follows. Catalyzes the ATP-dependent amidation of deamido-NAD to form NAD. Uses ammonia as a nitrogen source. This chain is NH(3)-dependent NAD(+) synthetase, found in Chlorobaculum parvum (strain DSM 263 / NCIMB 8327) (Chlorobium vibrioforme subsp. thiosulfatophilum).